The sequence spans 297 residues: Phosphoribosylaminoimidazole-succinocarboxamide synthase (297 aa).

Belongs to the SAICAR synthetase family.

It catalyses the reaction 5-amino-1-(5-phospho-D-ribosyl)imidazole-4-carboxylate + L-aspartate + ATP = (2S)-2-[5-amino-1-(5-phospho-beta-D-ribosyl)imidazole-4-carboxamido]succinate + ADP + phosphate + 2 H(+). The protein operates within purine metabolism; IMP biosynthesis via de novo pathway; 5-amino-1-(5-phospho-D-ribosyl)imidazole-4-carboxamide from 5-amino-1-(5-phospho-D-ribosyl)imidazole-4-carboxylate: step 1/2. In Methylobacillus flagellatus (strain ATCC 51484 / DSM 6875 / VKM B-1610 / KT), this protein is Phosphoribosylaminoimidazole-succinocarboxamide synthase.